A 140-amino-acid chain; its full sequence is NADPH-dependent 7-cyano-7-deazaguanine reductase (140 aa).

Cys49 (thioimide intermediate) is an active-site residue. Asp56 serves as the catalytic Proton donor. Residues 71-73 (IEL) and 90-91 (HE) each bind substrate.

The protein belongs to the GTP cyclohydrolase I family. QueF type 1 subfamily.

It localises to the cytoplasm. It carries out the reaction 7-aminomethyl-7-carbaguanine + 2 NADP(+) = 7-cyano-7-deazaguanine + 2 NADPH + 3 H(+). It participates in tRNA modification; tRNA-queuosine biosynthesis. Catalyzes the NADPH-dependent reduction of 7-cyano-7-deazaguanine (preQ0) to 7-aminomethyl-7-deazaguanine (preQ1). This chain is NADPH-dependent 7-cyano-7-deazaguanine reductase, found in Prochlorococcus marinus (strain NATL2A).